The chain runs to 103 residues: Large ribosomal subunit protein uL23 (103 aa).

This sequence belongs to the universal ribosomal protein uL23 family. As to quaternary structure, part of the 50S ribosomal subunit. Contacts protein L29, and trigger factor when it is bound to the ribosome.

Its function is as follows. One of the early assembly proteins it binds 23S rRNA. One of the proteins that surrounds the polypeptide exit tunnel on the outside of the ribosome. Forms the main docking site for trigger factor binding to the ribosome. This is Large ribosomal subunit protein uL23 from Chlorobium phaeobacteroides (strain DSM 266 / SMG 266 / 2430).